Consider the following 421-residue polypeptide: EGFR adapter protein (421 aa).

4 disordered regions span residues 18 to 94 (TFIS…PQLQ), 109 to 154 (DVQE…RLVD), 173 to 194 (EDSR…SGCG), and 372 to 396 (PVPL…AGGT). Positions 21-30 (SSSSASSSSS) are enriched in low complexity. Over residues 62–89 (FFHHHHPPAHPHPPRQQPHPHSHSHPHP) the composition is skewed to basic residues. Residues 109-120 (DVQELSGQEHPH) are compositionally biased toward basic and acidic residues. Residues 181–194 (STCGSSLTSGSGCG) are compositionally biased toward low complexity. Positions 286–379 (WFQAGIPREI…LLPVPLTLPR (94 aa)) constitute an SH2 domain.

As to quaternary structure, may interact (via SH2 domain) with Egfr (when phosphorylated). As to expression, detected along the wing margin, with high levels of expression in two stripes of cells on either side of the dorsal/ventral boundary and lower levels of expression in a small region at the anteroposterior boundary (at protein level). High levels of expression along two parallel stripes of cells on either side of the wing pouch dorsal/ventral boundary, and slightly lower levels of expression in a region either side of the anteroposterior boundary. Also expressed in discrete regions of the wing imaginal disk outside of the pouch. Expressed in eye imaginal disk photoreceptors with highest levels of expression in R7 photoreceptor cells.

Involved in the negative regulation of the Egfr/Ras signaling pathway. During wing morphogenesis, may function redundantly with PVRAP to inhibit Egfr activity and prevent uncontrolled cell growth. The sequence is that of EGFR adapter protein from Drosophila melanogaster (Fruit fly).